Consider the following 490-residue polypeptide: Bifunctional protein HldE (490 aa).

Positions 1–330 (MERKEIESLF…AEIGHAHPDS (330 aa)) are ribokinase. Position 205–208 (205–208 (NRKE)) interacts with ATP. The active site involves aspartate 275. The segment at 356–490 (FTNGCFDLLH…EKIRTGSIKE (135 aa)) is cytidylyltransferase.

It in the N-terminal section; belongs to the carbohydrate kinase PfkB family. This sequence in the C-terminal section; belongs to the cytidylyltransferase family. In terms of assembly, homodimer.

It catalyses the reaction D-glycero-beta-D-manno-heptose 7-phosphate + ATP = D-glycero-beta-D-manno-heptose 1,7-bisphosphate + ADP + H(+). The catalysed reaction is D-glycero-beta-D-manno-heptose 1-phosphate + ATP + H(+) = ADP-D-glycero-beta-D-manno-heptose + diphosphate. It participates in nucleotide-sugar biosynthesis; ADP-L-glycero-beta-D-manno-heptose biosynthesis; ADP-L-glycero-beta-D-manno-heptose from D-glycero-beta-D-manno-heptose 7-phosphate: step 1/4. It functions in the pathway nucleotide-sugar biosynthesis; ADP-L-glycero-beta-D-manno-heptose biosynthesis; ADP-L-glycero-beta-D-manno-heptose from D-glycero-beta-D-manno-heptose 7-phosphate: step 3/4. Its function is as follows. Catalyzes the phosphorylation of D-glycero-D-manno-heptose 7-phosphate at the C-1 position to selectively form D-glycero-beta-D-manno-heptose-1,7-bisphosphate. In terms of biological role, catalyzes the ADP transfer from ATP to D-glycero-beta-D-manno-heptose 1-phosphate, yielding ADP-D-glycero-beta-D-manno-heptose. This chain is Bifunctional protein HldE, found in Geotalea uraniireducens (strain Rf4) (Geobacter uraniireducens).